The sequence spans 456 residues: Bifunctional protein GlmU (456 aa).

Residues 1-229 (MLNSAMSVVI…ISETDGVNNR (229 aa)) are pyrophosphorylase. UDP-N-acetyl-alpha-D-glucosamine contacts are provided by residues 11–14 (LAAG), Lys25, Gln76, 81–82 (GT), 103–105 (YGD), Gly140, Glu154, Asn169, and Asn227. Asp105 is a binding site for Mg(2+). Mg(2+) is bound at residue Asn227. Residues 230–250 (LQLSRLERIYQAEQAEKLLLS) are linker. Positions 251–456 (GVMLRDPARF…QGWQRPVKKK (206 aa)) are N-acetyltransferase. 2 residues coordinate UDP-N-acetyl-alpha-D-glucosamine: Arg333 and Lys351. The active-site Proton acceptor is the His363. The UDP-N-acetyl-alpha-D-glucosamine site is built by Tyr366 and Asn377. Acetyl-CoA contacts are provided by residues Ala380, 386 to 387 (NY), Ser405, Ala423, and Arg440.

This sequence in the N-terminal section; belongs to the N-acetylglucosamine-1-phosphate uridyltransferase family. The protein in the C-terminal section; belongs to the transferase hexapeptide repeat family. Homotrimer. Mg(2+) is required as a cofactor.

It localises to the cytoplasm. The enzyme catalyses alpha-D-glucosamine 1-phosphate + acetyl-CoA = N-acetyl-alpha-D-glucosamine 1-phosphate + CoA + H(+). It carries out the reaction N-acetyl-alpha-D-glucosamine 1-phosphate + UTP + H(+) = UDP-N-acetyl-alpha-D-glucosamine + diphosphate. It functions in the pathway nucleotide-sugar biosynthesis; UDP-N-acetyl-alpha-D-glucosamine biosynthesis; N-acetyl-alpha-D-glucosamine 1-phosphate from alpha-D-glucosamine 6-phosphate (route II): step 2/2. It participates in nucleotide-sugar biosynthesis; UDP-N-acetyl-alpha-D-glucosamine biosynthesis; UDP-N-acetyl-alpha-D-glucosamine from N-acetyl-alpha-D-glucosamine 1-phosphate: step 1/1. Its pathway is bacterial outer membrane biogenesis; LPS lipid A biosynthesis. In terms of biological role, catalyzes the last two sequential reactions in the de novo biosynthetic pathway for UDP-N-acetylglucosamine (UDP-GlcNAc). The C-terminal domain catalyzes the transfer of acetyl group from acetyl coenzyme A to glucosamine-1-phosphate (GlcN-1-P) to produce N-acetylglucosamine-1-phosphate (GlcNAc-1-P), which is converted into UDP-GlcNAc by the transfer of uridine 5-monophosphate (from uridine 5-triphosphate), a reaction catalyzed by the N-terminal domain. This Salmonella agona (strain SL483) protein is Bifunctional protein GlmU.